The following is a 276-amino-acid chain: Large ribosomal subunit protein uL2 (276 aa).

The tract at residues Asn212–Lys276 is disordered. The span at Tyr257–Lys276 shows a compositional bias: basic residues.

The protein belongs to the universal ribosomal protein uL2 family. Part of the 50S ribosomal subunit. Forms a bridge to the 30S subunit in the 70S ribosome.

In terms of biological role, one of the primary rRNA binding proteins. Required for association of the 30S and 50S subunits to form the 70S ribosome, for tRNA binding and peptide bond formation. It has been suggested to have peptidyltransferase activity; this is somewhat controversial. Makes several contacts with the 16S rRNA in the 70S ribosome. The sequence is that of Large ribosomal subunit protein uL2 from Helicobacter pylori (strain HPAG1).